We begin with the raw amino-acid sequence, 495 residues long: Cytoplasmic alpha-amylase (495 aa).

2 residues coordinate Ca(2+): asparagine 104 and aspartate 198. The active-site Nucleophile is aspartate 235. Residue histidine 239 coordinates Ca(2+). Glutamate 265 serves as the catalytic Proton donor.

Belongs to the glycosyl hydrolase 13 family. As to quaternary structure, monomer. Ca(2+) is required as a cofactor.

It localises to the cytoplasm. It carries out the reaction Endohydrolysis of (1-&gt;4)-alpha-D-glucosidic linkages in polysaccharides containing three or more (1-&gt;4)-alpha-linked D-glucose units.. This Escherichia coli (strain K12) protein is Cytoplasmic alpha-amylase (amyA).